Here is a 331-residue protein sequence, read N- to C-terminus: NADH-quinone oxidoreductase subunit H (331 aa).

The next 9 membrane-spanning stretches (helical) occupy residues 6 to 26, 45 to 65, 78 to 98, 120 to 140, 167 to 187, 193 to 213, 241 to 261, 263 to 283, and 311 to 331; these read FFIV…ATLA, GPWM…IKLF, FIFL…MSVI, IGIL…LIGG, GLSL…DIVH, ITSW…IAAF, MRWG…SIVI, LIFL…MIFL, and CWKI…FVII.

The protein belongs to the complex I subunit 1 family. NDH-1 is composed of 14 different subunits. Subunits NuoA, H, J, K, L, M, N constitute the membrane sector of the complex.

Its subcellular location is the cell inner membrane. It catalyses the reaction a quinone + NADH + 5 H(+)(in) = a quinol + NAD(+) + 4 H(+)(out). Functionally, NDH-1 shuttles electrons from NADH, via FMN and iron-sulfur (Fe-S) centers, to quinones in the respiratory chain. The immediate electron acceptor for the enzyme in this species is believed to be ubiquinone. Couples the redox reaction to proton translocation (for every two electrons transferred, four hydrogen ions are translocated across the cytoplasmic membrane), and thus conserves the redox energy in a proton gradient. This subunit may bind ubiquinone. The sequence is that of NADH-quinone oxidoreductase subunit H from Campylobacter hominis (strain ATCC BAA-381 / DSM 21671 / CCUG 45161 / LMG 19568 / NCTC 13146 / CH001A).